A 260-amino-acid polypeptide reads, in one-letter code: ATP-dependent zinc metalloprotease FTSH, chloroplastic (260 aa).

His-219 provides a ligand contact to Zn(2+). Glu-220 is an active-site residue. His-223 is a binding site for Zn(2+).

The protein in the N-terminal section; belongs to the AAA ATPase family. In the C-terminal section; belongs to the peptidase M41 family. Zn(2+) serves as cofactor.

The protein localises to the plastid. It is found in the chloroplast thylakoid membrane. In terms of biological role, probable ATP-dependent zinc metallopeptidase. This Helianthus annuus (Common sunflower) protein is ATP-dependent zinc metalloprotease FTSH, chloroplastic.